Here is an 81-residue protein sequence, read N- to C-terminus: Photosystem I iron-sulfur center (81 aa).

4Fe-4S ferredoxin-type domains are found at residues Ala2–Trp31 and Ile39–Tyr68. [4Fe-4S] cluster is bound by residues Cys11, Cys14, Cys17, Cys21, Cys48, Cys51, Cys54, and Cys58.

In terms of assembly, the eukaryotic PSI reaction center is composed of at least 11 subunits. [4Fe-4S] cluster serves as cofactor.

The protein localises to the plastid. It localises to the chloroplast thylakoid membrane. It carries out the reaction reduced [plastocyanin] + hnu + oxidized [2Fe-2S]-[ferredoxin] = oxidized [plastocyanin] + reduced [2Fe-2S]-[ferredoxin]. Functionally, apoprotein for the two 4Fe-4S centers FA and FB of photosystem I (PSI); essential for photochemical activity. FB is the terminal electron acceptor of PSI, donating electrons to ferredoxin. The C-terminus interacts with PsaA/B/D and helps assemble the protein into the PSI complex. Required for binding of PsaD and PsaE to PSI. PSI is a plastocyanin-ferredoxin oxidoreductase, converting photonic excitation into a charge separation, which transfers an electron from the donor P700 chlorophyll pair to the spectroscopically characterized acceptors A0, A1, FX, FA and FB in turn. In Pinus thunbergii (Japanese black pine), this protein is Photosystem I iron-sulfur center.